A 152-amino-acid polypeptide reads, in one-letter code: Deoxyuridine 5'-triphosphate nucleotidohydrolase (152 aa).

Substrate is bound by residues 71 to 73, asparagine 84, 88 to 90, and methionine 98; these read RSG and LID.

It belongs to the dUTPase family. The cofactor is Mg(2+).

The catalysed reaction is dUTP + H2O = dUMP + diphosphate + H(+). It functions in the pathway pyrimidine metabolism; dUMP biosynthesis; dUMP from dCTP (dUTP route): step 2/2. This enzyme is involved in nucleotide metabolism: it produces dUMP, the immediate precursor of thymidine nucleotides and it decreases the intracellular concentration of dUTP so that uracil cannot be incorporated into DNA. The polypeptide is Deoxyuridine 5'-triphosphate nucleotidohydrolase (Shewanella halifaxensis (strain HAW-EB4)).